Consider the following 360-residue polypeptide: Phosphoserine aminotransferase (360 aa).

Residue Arg42 participates in L-glutamate binding. Residues 76-77, Trp102, Thr152, Asp172, and Gln195 each bind pyridoxal 5'-phosphate; that span reads AR. N6-(pyridoxal phosphate)lysine is present on Lys196. Position 237–238 (237–238) interacts with pyridoxal 5'-phosphate; it reads NT.

Belongs to the class-V pyridoxal-phosphate-dependent aminotransferase family. SerC subfamily. As to quaternary structure, homodimer. Pyridoxal 5'-phosphate is required as a cofactor.

It localises to the cytoplasm. The catalysed reaction is O-phospho-L-serine + 2-oxoglutarate = 3-phosphooxypyruvate + L-glutamate. It catalyses the reaction 4-(phosphooxy)-L-threonine + 2-oxoglutarate = (R)-3-hydroxy-2-oxo-4-phosphooxybutanoate + L-glutamate. Its pathway is amino-acid biosynthesis; L-serine biosynthesis; L-serine from 3-phospho-D-glycerate: step 2/3. The protein operates within cofactor biosynthesis; pyridoxine 5'-phosphate biosynthesis; pyridoxine 5'-phosphate from D-erythrose 4-phosphate: step 3/5. Functionally, catalyzes the reversible conversion of 3-phosphohydroxypyruvate to phosphoserine and of 3-hydroxy-2-oxo-4-phosphonooxybutanoate to phosphohydroxythreonine. This chain is Phosphoserine aminotransferase, found in Pasteurella multocida (strain Pm70).